Reading from the N-terminus, the 293-residue chain is Short-chain dehydrogenase/reductase PhomF (293 aa).

Positions 31 and 102 each coordinate NADP(+). S175 functions as the Proton donor in the catalytic mechanism. Residues Y190, K194, and S225 each coordinate NADP(+). Y190 (proton acceptor) is an active-site residue. K194 acts as the Lowers pKa of active site Tyr in catalysis.

The protein belongs to the short-chain dehydrogenases/reductases (SDR) family.

In terms of biological role, short-chain dehydrogenase/reductase; part of the gene cluster that mediates the biosynthesis of the phomopsins, a group of hexapeptide mycotoxins which infects lupins and causes lupinosis disease in livestock. The role of phomF within the phomopsins biosynthesis pathway has still to be determined. The pathway starts with the processing of the precursor phomA by several endopeptidases including kexin proteases as well as the cluster-specific S41 family peptidase phomP1 and the oligopeptidase phomG to produce 10 identical copies of the hexapeptide Tyr-Val-Ile-Pro-Ile-Asp. After being excised from the precursor peptide, the core peptides are cyclized and modified post-translationally by enzymes encoded within the gene cluster. The timing and order of proteolysis of the phomA precursor and PTMs are still unknown. Two tyrosinase-like enzymes, phomQ1 and phomQ2, catalyze the chlorination and hydroxylation of Tyr, respectively. PhomYb, is proposed to be involved in the construction of the macrocyclic structure. The other 4 ustYa family proteins may be involved in PTMs that generate the unique structure of phomopsin A. PhomYa is required for the hydroxylation of C-beta of Tyr. PhomYc, phomYd, and phomYe are responsible for the biosynthesis of 2,3-dehydroisoleucine (dIle), 2,3-dehydroaspartic acid (dAsp), and 3,4-dehydroproline (dPro), respectively. While dIle formation by phomYc is indispensable for the installation of dAsp by phomYd, the order of the other PTMs have not been elucidated yet. Most of the biosynthetic enzymes likely have broad substrate specificity, and thus, there might be a metabolic grid from a precursor to phomopsin A. The enzyme(s) responsible for the biosynthesis of 3,4-dehydrovaline (dVal) have also not been identified yet. Finally, phomM acts as an S-adenosylmethionine-dependent alpha-N-methyltransferase that catalyzes two successive N-methylation reactions, converting N-desmethyl-phomopsin A to phomopsin A and phomopsin A further to an N,N-dimethylated congener called phomopsin E. The polypeptide is Short-chain dehydrogenase/reductase PhomF (Diaporthe leptostromiformis (Lupinosis disease fungus)).